The chain runs to 514 residues: Ammonium transporter 1 member 2 (514 aa).

11 helical membrane passes run 56-76, 91-111, 140-160, 165-185, 212-232, 257-277, 291-313, 328-348, 351-371, 380-400, and 431-451; these read LLFS…LCAG, VLDA…FAFG, FFLY…GSIA, FVAY…TVSH, FAGS…GALV, VVLG…GSFL, GQWS…AALT, IDVC…CAVV, WAAI…NLLA, LEAA…TGLF, and IVQI…LFYG. T472 bears the Phosphothreonine mark.

This sequence belongs to the ammonia transporter channel (TC 1.A.11.2) family. In terms of tissue distribution, high expression in root.

The protein resides in the membrane. In terms of biological role, ammonium transporter probably involved in ammonium uptake from the soil. In Arabidopsis thaliana (Mouse-ear cress), this protein is Ammonium transporter 1 member 2 (AMT1-2).